We begin with the raw amino-acid sequence, 327 residues long: Microtubule-associated protein RP/EB family member 2 (327 aa).

The disordered stretch occupies residues methionine 1 to aspartate 21. The residue at position 2 (proline 2) is an N-acetylalanine. At serine 9 the chain carries Phosphoserine. The 103-residue stretch at threonine 57–aspartate 159 folds into the Calponin-homology (CH) domain. A Phosphotyrosine modification is found at tyrosine 167. 2 disordered regions span residues glutamate 171 to leucine 240 and alanine 299 to tyrosine 327. The tract at residues glutamine 187–tyrosine 327 is DCTN1-binding. A compositionally biased stretch (low complexity) spans serine 200–serine 234. A phosphoserine mark is found at serine 219 and serine 236. One can recognise an EB1 C-terminal domain in the interval serine 236 to histidine 306. The interval glutamate 259–glutamate 302 is APC-binding. Residues serine 300 to histidine 317 are compositionally biased toward basic and acidic residues. A compositionally biased stretch (low complexity) spans glutamate 318–tyrosine 327.

This sequence belongs to the MAPRE family. In terms of assembly, interacts with DCTN1. Interacts with APC (via C-terminal). Interacts with monomeric and polymerized tubulin. Interacts with SLAIN1. Interacts (via the N-terminal region) with BAG1. Interacts with ASB14. Interacts with HAX1; this interaction is essential for epidermal cell migration. Post-translationally, phosphorylated at Ser-236 by CK2 leading to enhanced cell adhesion. Phosphorylated by CDK1 and AURKB during mitosis reduces the binding affinity of MAPRE2 for microtubules. Ubiquitinated in an ASB14-dependent manner; leading to proteasomal degradation. Expressed in different tumor cell lines. Up-regulated in activated B- and T-lymphocytes.

The protein resides in the cytoplasm. It is found in the cytoskeleton. In terms of biological role, adapter protein that is involved in microtubule polymerization, and spindle function by stabilizing microtubules and anchoring them at centrosomes. Therefore, ensures mitotic progression and genome stability. Acts as a central regulator of microtubule reorganization in apico-basal epithelial differentiation. Plays a role during oocyte meiosis by regulating microtubule dynamics. Participates in neurite growth by interacting with plexin B3/PLXNB3 and microtubule reorganization during apico-basal epithelial differentiation. Also plays an essential role for cell migration and focal adhesion dynamics. Mechanistically, recruits HAX1 to microtubules in order to regulate focal adhesion dynamics. This Homo sapiens (Human) protein is Microtubule-associated protein RP/EB family member 2 (MAPRE2).